The following is a 549-amino-acid chain: Hydroxylamine reductase (549 aa).

[4Fe-4S] cluster contacts are provided by cysteine 5, cysteine 8, cysteine 17, and cysteine 23. Hybrid [4Fe-2O-2S] cluster-binding residues include histidine 243, glutamate 267, cysteine 311, cysteine 403, cysteine 431, cysteine 456, glutamate 491, and lysine 493. Position 403 is a cysteine persulfide (cysteine 403).

It belongs to the HCP family. [4Fe-4S] cluster is required as a cofactor. Hybrid [4Fe-2O-2S] cluster serves as cofactor.

It localises to the cytoplasm. It catalyses the reaction A + NH4(+) + H2O = hydroxylamine + AH2 + H(+). Its function is as follows. Catalyzes the reduction of hydroxylamine to form NH(3) and H(2)O. The polypeptide is Hydroxylamine reductase (Desulfitobacterium hafniense (strain Y51)).